The sequence spans 380 residues: Aminomethyltransferase (380 aa).

This sequence belongs to the GcvT family. As to quaternary structure, the glycine cleavage system is composed of four proteins: P, T, L and H.

It carries out the reaction N(6)-[(R)-S(8)-aminomethyldihydrolipoyl]-L-lysyl-[protein] + (6S)-5,6,7,8-tetrahydrofolate = N(6)-[(R)-dihydrolipoyl]-L-lysyl-[protein] + (6R)-5,10-methylene-5,6,7,8-tetrahydrofolate + NH4(+). The glycine cleavage system catalyzes the degradation of glycine. This is Aminomethyltransferase from Koribacter versatilis (strain Ellin345).